The sequence spans 380 residues: Cytochrome b (380 aa).

4 consecutive transmembrane segments (helical) span residues 33–53, 77–98, 113–133, and 178–198; these read FGSL…FLAM, WLIR…YLHI, WNVG…GYVL, and FFAF…IHLI. Residues H83 and H97 each coordinate heme b. 2 residues coordinate heme b: H182 and H196. H201 is an a ubiquinone binding site. The next 4 membrane-spanning stretches (helical) occupy residues 226-246, 288-308, 320-340, and 347-367; these read YKDL…ALFS, LGGV…PILH, FSQF…WIGG, and FVII…VMIP.

This sequence belongs to the cytochrome b family. In terms of assembly, the cytochrome bc1 complex contains 3 respiratory subunits (MT-CYB, CYC1 and UQCRFS1), 2 core proteins (UQCRC1 and UQCRC2) and probably 6 low-molecular weight proteins. Requires heme b as cofactor.

Its subcellular location is the mitochondrion inner membrane. Its function is as follows. Component of the ubiquinol-cytochrome c reductase complex (complex III or cytochrome b-c1 complex) that is part of the mitochondrial respiratory chain. The b-c1 complex mediates electron transfer from ubiquinol to cytochrome c. Contributes to the generation of a proton gradient across the mitochondrial membrane that is then used for ATP synthesis. This chain is Cytochrome b (mt-cyb), found in Paralichthys olivaceus (Bastard halibut).